The primary structure comprises 64 residues: uncharacterized protein (64 aa).

Residues 33–55 traverse the membrane as a helical segment; sequence YTPLGSYMIFGIVHYFCSYHIGI.

Its subcellular location is the membrane. This is an uncharacterized protein from Saccharomyces cerevisiae (strain ATCC 204508 / S288c) (Baker's yeast).